The following is a 272-amino-acid chain: NH(3)-dependent NAD(+) synthetase (272 aa).

Residue 45–52 participates in ATP binding; the sequence is GISGGQDS. Aspartate 51 is a binding site for Mg(2+). A deamido-NAD(+)-binding site is contributed by arginine 138. Threonine 158 contacts ATP. Glutamate 163 is a Mg(2+) binding site. Deamido-NAD(+)-binding residues include lysine 171 and aspartate 178. Positions 187 and 209 each coordinate ATP. 258 to 259 is a deamido-NAD(+) binding site; it reads HK.

The protein belongs to the NAD synthetase family. Homodimer.

It catalyses the reaction deamido-NAD(+) + NH4(+) + ATP = AMP + diphosphate + NAD(+) + H(+). Its pathway is cofactor biosynthesis; NAD(+) biosynthesis; NAD(+) from deamido-NAD(+) (ammonia route): step 1/1. Catalyzes the ATP-dependent amidation of deamido-NAD to form NAD. Uses ammonia as a nitrogen source. The polypeptide is NH(3)-dependent NAD(+) synthetase (Bacillus cereus (strain G9842)).